The chain runs to 89 residues: DNA/RNA-binding protein Alba (89 aa).

At lysine 11 the chain carries N6-acetyllysine.

It belongs to the histone-like Alba family. Post-translationally, acetylated. Acetylation at Lys-11 decreases DNA-binding affinity.

Its subcellular location is the cytoplasm. The protein resides in the chromosome. Binds double-stranded DNA tightly but without sequence specificity. Involved in DNA compaction. The polypeptide is DNA/RNA-binding protein Alba (Thermoplasma acidophilum (strain ATCC 25905 / DSM 1728 / JCM 9062 / NBRC 15155 / AMRC-C165)).